A 289-amino-acid chain; its full sequence is Serine/threonine-protein phosphatase PGAM5, mitochondrial (289 aa).

Topologically, residues 1–6 are mitochondrial matrix; that stretch reads MAFRQA. The chain crosses the membrane as a helical span at residues 7-29; sequence LQLAACGLAGGSAAVLFSAVAVG. Over 30–289 the chain is Mitochondrial intermembrane; it reads KPRAGGDAEP…FMPPDKITRS (260 aa). The interval 32 to 59 is disordered; that stretch reads RAGGDAEPRPAEPPAWAGGARPGPGVWD. Low complexity predominate over residues 45–56; that stretch reads PAWAGGARPGPG. Residues 77 to 82 form an interaction with KEAP1 region; sequence NVESGE. 2 positions are modified to phosphoserine: serine 80 and serine 87. An N6-acetyllysine mark is found at lysine 116, lysine 144, and lysine 191.

It belongs to the phosphoglycerate mutase family. BPG-dependent PGAM subfamily. As to quaternary structure, dimer. Forms a ternary complex with NFE2L2 and KEAP1. Interacts with BCL2L1 and MAP3K5. Upon TNF-induced necrosis, forms in complex with RIPK1, RIPK3 and MLKL; the formation of this complex leads to PGAM5 phosphorylation. Isoform 2, but not isoform 1, interacts with DNM1L; this interaction leads to DNM1L dephosphorylation and activation and eventually to mitochondria fragmentation. In terms of processing, both isoform 1 and isoform 2 are phosphorylated by the RIPK1/RIPK3 complex under necrotic conditions. This phosphorylation increases PGAM5 phosphatase activity. Proteolytically cleaved by PARL in response to loss of mitochondrial membrane potential.

Its subcellular location is the mitochondrion outer membrane. It localises to the mitochondrion inner membrane. It carries out the reaction O-phospho-L-seryl-[protein] + H2O = L-seryl-[protein] + phosphate. The enzyme catalyses O-phospho-L-threonyl-[protein] + H2O = L-threonyl-[protein] + phosphate. In terms of biological role, mitochondrial serine/threonine phosphatase that dephosphorylates various substrates and thus plays a role in different biological processes including cellular senescence or mitophagy. Modulates cellular senescence by regulating mitochondrial dynamics. Mechanistically, participates in mitochondrial fission through dephosphorylating DNM1L/DRP1. Additionally, dephosphorylates MFN2 in a stress-sensitive manner and consequently protects it from ubiquitination and degradation to promote mitochondrial network formation. Regulates mitophagy independent of PARKIN by interacting with and dephosphorylating FUNDC1, which interacts with LC3. Regulates anti-oxidative response by forming a tertiary complex with KEAP1 and NRF2. Regulates necroptosis by acting as a RIPK3 target and recruiting the RIPK1-RIPK3-MLKL necrosis 'attack' complex to mitochondria. The sequence is that of Serine/threonine-protein phosphatase PGAM5, mitochondrial (PGAM5) from Homo sapiens (Human).